Here is a 187-residue protein sequence, read N- to C-terminus: Large ribosomal subunit protein uL6 (187 aa).

This sequence belongs to the universal ribosomal protein uL6 family. Part of the 50S ribosomal subunit.

Its function is as follows. This protein binds to the 23S rRNA, and is important in its secondary structure. It is located near the subunit interface in the base of the L7/L12 stalk, and near the tRNA binding site of the peptidyltransferase center. This chain is Large ribosomal subunit protein uL6, found in Roseiflexus sp. (strain RS-1).